The chain runs to 847 residues: Protein translocase subunit SecA (847 aa).

Residues Gln87, 105–109, and Asp495 contribute to the ATP site; that span reads GEGKT. The tract at residues 828 to 847 is disordered; that stretch reads SSNSPSDARNRPIEHDDNAV. Residues 835 to 847 show a composition bias toward basic and acidic residues; it reads ARNRPIEHDDNAV.

The protein belongs to the SecA family. Monomer and homodimer. Part of the essential Sec protein translocation apparatus which comprises SecA, SecYEG and auxiliary proteins SecDF. Other proteins may also be involved.

The protein resides in the cell membrane. The protein localises to the cytoplasm. The enzyme catalyses ATP + H2O + cellular proteinSide 1 = ADP + phosphate + cellular proteinSide 2.. Part of the Sec protein translocase complex. Interacts with the SecYEG preprotein conducting channel. Has a central role in coupling the hydrolysis of ATP to the transfer of proteins into and across the cell membrane, serving as an ATP-driven molecular motor driving the stepwise translocation of polypeptide chains across the membrane. This chain is Protein translocase subunit SecA, found in Tropheryma whipplei (strain TW08/27) (Whipple's bacillus).